The following is a 361-amino-acid chain: Free fatty acid receptor 4 (361 aa).

Over 1 to 45 the chain is Extracellular; sequence MSPECARAAGDAPLRSLEQANRTRFSFFSDVKGDHRLLLAAVETT. Residue asparagine 21 is glycosylated (N-linked (GlcNAc...) asparagine). A helical transmembrane segment spans residues 46–66; sequence VLALIFAVSLLGNVCALVLVA. Topologically, residues 67 to 77 are cytoplasmic; that stretch reads RRRRRGTTACL. Residues 78–98 traverse the membrane as a helical segment; that stretch reads VLNLFCADLLFISAIPLVLAV. Residues 99–112 are Extracellular-facing; it reads RWTEAWLLGPVACH. Cysteine 111 and cysteine 194 are disulfide-bonded. A helical transmembrane segment spans residues 113–133; that stretch reads LLFYLMTLSGSVTILTLAAVS. Topologically, residues 134-156 are cytoplasmic; sequence LERMVCIVHLQRGVRGPGRRARA. The chain crosses the membrane as a helical span at residues 157–177; that stretch reads VLLTLIWGYSAVAALPLCVFF. The Extracellular segment spans residues 178–204; it reads RVVPQRLPGADQEISICTLIWPTIAGE. A helical transmembrane segment spans residues 205-225; that stretch reads ISWDVSFVTLNFLVPGLVIVI. Over 226–268 the chain is Cytoplasmic; the sequence is SYSKILQITKASRKRLTVSLAYSESHQIRVSQQDFRLFRTLFL. Residues 269 to 289 form a helical membrane-spanning segment; that stretch reads LMVSFFIMWSPIIITILLILI. Residues 290–295 lie on the Extracellular side of the membrane; that stretch reads QNFKQD. A helical membrane pass occupies residues 296–316; the sequence is LVIWPSLFFWVVAFTFANSAL. Residues 317–361 lie on the Cytoplasmic side of the membrane; sequence NPILYNMTLCRNEWKKIFCCFWFPEKGAILTDTSVKRNDLSVISG. Phosphothreonine occurs at positions 347 and 349. 3 positions are modified to phosphoserine: serine 350, serine 357, and serine 360.

Belongs to the G-protein coupled receptor 1 family. As to quaternary structure, interacts (via C-terminus) with ARRB2 following LCFAs stimulation. Post-translationally, phosphorylated at two clusters of Ser and Thr residues located in the intracellular C-terminus. Prerequisite for FFAR4 internalization via an ARRB2-dependent pathway. As to expression, highly expressed in lung and colon.

It localises to the cell membrane. The protein localises to the endosome membrane. Its subcellular location is the lysosome membrane. It is found in the cell projection. The protein resides in the cilium membrane. Functionally, G-protein-coupled receptor for long-chain fatty acids (LCFAs) with a major role in adipogenesis, energy metabolism and inflammation. Signals via G-protein and beta-arrestin pathways. LCFAs sensing initiates activation of phosphoinositidase C-linked G proteins GNAQ and GNA11 (G(q)/G(11)), inducing a variety of cellular responses via second messenger pathways such as intracellular calcium mobilization, modulation of cyclic adenosine monophosphate (cAMP) production, and mitogen-activated protein kinases (MAPKs). After LCFAs binding, associates with beta-arrestin ARRB2 that acts as an adapter protein coupling the receptor to specific downstream signaling pathways, as well as mediating receptor endocytosis. In response to dietary fats, plays an important role in the regulation of adipocyte proliferation and differentiation. Acts as a receptor for omega-3 polyunsaturated fatty acids (PUFAs) at primary cilium of perivascular preadipocytes, initiating an adipogenic program via cAMP and CTCF-dependent chromatin remodeling that ultimately results in transcriptional activation of adipogenic genes and cell cycle entry. Induces differentiation of brown and beige adipocytes probably via autocrine and endocrine functions of FGF21 hormone. Contributes to the thermogenic activation of brown adipose tissue and the browning of white adipose tissue. Activates brown adipocytes by initiating intracellular calcium signaling leading to mitochondrial depolarization and fission, and overall increased mitochondrial respiration. Consequently stimulates fatty acid uptake and oxidation in mitochondria together with UCP1-mediated thermogenic respiration, eventually reducing fat mass. Regulates bi-potential differentiation of bone marrow mesenchymal stem cells toward osteoblasts or adipocytes likely by up-regulating distinct integrins. In response to dietary fats regulates hormone secretion and appetite. Stimulates GIP and GLP1 secretion from enteroendocrine cells as well as GCG secretion in pancreatic alpha cells, thereby playing a role in the regulation of blood glucose levels. Negatively regulates glucose-induced SST secretion in pancreatic delta cells. Mediates LCFAs inhibition of GHRL secretion, an appetite-controlling hormone. In taste buds, contributes to sensing of dietary fatty acids by the gustatory system. During the inflammatory response, promotes anti-inflammatory M2 macrophage differentiation in adipose tissue. Mediates the anti-inflammatory effects of omega-3 PUFAs via inhibition of NLRP3 inflammasome activation. In this pathway, interacts with adapter protein ARRB2 and inhibits the priming step triggered by Toll-like receptors (TLRs) at the level of TAK1 and TAB1. Further inhibits the activation step when ARRB2 directly associates with NLRP3, leading to inhibition of pro-inflammatory cytokine release. Mediates LCFAs anti-apoptotic effects. The sequence is that of Free fatty acid receptor 4 (FFAR4) from Macaca fascicularis (Crab-eating macaque).